The chain runs to 300 residues: tRNA dimethylallyltransferase (300 aa).

11–18 serves as a coordination point for ATP; it reads GPTAVGKS. 13–18 contacts substrate; sequence TAVGKS. Residues 35–38 are interaction with substrate tRNA; it reads DSVQ.

The protein belongs to the IPP transferase family. Monomer. Mg(2+) is required as a cofactor.

The catalysed reaction is adenosine(37) in tRNA + dimethylallyl diphosphate = N(6)-dimethylallyladenosine(37) in tRNA + diphosphate. Functionally, catalyzes the transfer of a dimethylallyl group onto the adenine at position 37 in tRNAs that read codons beginning with uridine, leading to the formation of N6-(dimethylallyl)adenosine (i(6)A). In Borrelia hermsii (strain HS1 / DAH), this protein is tRNA dimethylallyltransferase.